Reading from the N-terminus, the 122-residue chain is Large ribosomal subunit protein uL14 (122 aa).

It belongs to the universal ribosomal protein uL14 family. Part of the 50S ribosomal subunit. Forms a cluster with proteins L3 and L19. In the 70S ribosome, L14 and L19 interact and together make contacts with the 16S rRNA in bridges B5 and B8.

Binds to 23S rRNA. Forms part of two intersubunit bridges in the 70S ribosome. The sequence is that of Large ribosomal subunit protein uL14 from Rickettsia bellii (strain OSU 85-389).